The chain runs to 173 residues: Crossover junction endodeoxyribonuclease RuvC (173 aa).

Residues D8, E67, and D139 contribute to the active site. Residues D8, E67, and D139 each coordinate Mg(2+).

It belongs to the RuvC family. In terms of assembly, homodimer which binds Holliday junction (HJ) DNA. The HJ becomes 2-fold symmetrical on binding to RuvC with unstacked arms; it has a different conformation from HJ DNA in complex with RuvA. In the full resolvosome a probable DNA-RuvA(4)-RuvB(12)-RuvC(2) complex forms which resolves the HJ. Mg(2+) serves as cofactor.

It is found in the cytoplasm. It catalyses the reaction Endonucleolytic cleavage at a junction such as a reciprocal single-stranded crossover between two homologous DNA duplexes (Holliday junction).. In terms of biological role, the RuvA-RuvB-RuvC complex processes Holliday junction (HJ) DNA during genetic recombination and DNA repair. Endonuclease that resolves HJ intermediates. Cleaves cruciform DNA by making single-stranded nicks across the HJ at symmetrical positions within the homologous arms, yielding a 5'-phosphate and a 3'-hydroxyl group; requires a central core of homology in the junction. The consensus cleavage sequence is 5'-(A/T)TT(C/G)-3'. Cleavage occurs on the 3'-side of the TT dinucleotide at the point of strand exchange. HJ branch migration catalyzed by RuvA-RuvB allows RuvC to scan DNA until it finds its consensus sequence, where it cleaves and resolves the cruciform DNA. This chain is Crossover junction endodeoxyribonuclease RuvC, found in Cronobacter sakazakii (strain ATCC BAA-894) (Enterobacter sakazakii).